Here is a 421-residue protein sequence, read N- to C-terminus: 3-isopropylmalate dehydratase large subunit (421 aa).

3 residues coordinate [4Fe-4S] cluster: C301, C361, and C364.

It belongs to the aconitase/IPM isomerase family. LeuC type 2 subfamily. In terms of assembly, heterodimer of LeuC and LeuD. [4Fe-4S] cluster serves as cofactor.

The catalysed reaction is (2R,3S)-3-isopropylmalate = (2S)-2-isopropylmalate. The protein operates within amino-acid biosynthesis; L-leucine biosynthesis; L-leucine from 3-methyl-2-oxobutanoate: step 2/4. Its function is as follows. Catalyzes the isomerization between 2-isopropylmalate and 3-isopropylmalate, via the formation of 2-isopropylmaleate. In Desulfitobacterium hafniense (strain Y51), this protein is 3-isopropylmalate dehydratase large subunit.